Reading from the N-terminus, the 215-residue chain is Putative O-methyltransferase MAB_1361c (215 aa).

S-adenosyl-L-methionine contacts are provided by residues Val-42, Glu-64, 66 to 67, Ser-72, Asp-90, and Val-91; that span reads GT. Asp-138 lines the substrate pocket.

It belongs to the class I-like SAM-binding methyltransferase superfamily. Cation-dependent O-methyltransferase family.

This is Putative O-methyltransferase MAB_1361c from Mycobacteroides abscessus (strain ATCC 19977 / DSM 44196 / CCUG 20993 / CIP 104536 / JCM 13569 / NCTC 13031 / TMC 1543 / L948) (Mycobacterium abscessus).